Consider the following 271-residue polypeptide: Ribosomal RNA small subunit methyltransferase A (271 aa).

The S-adenosyl-L-methionine site is built by His18, Leu20, Gly45, Glu66, Asp91, and Asn113.

This sequence belongs to the class I-like SAM-binding methyltransferase superfamily. rRNA adenine N(6)-methyltransferase family. RsmA subfamily.

It is found in the cytoplasm. The catalysed reaction is adenosine(1518)/adenosine(1519) in 16S rRNA + 4 S-adenosyl-L-methionine = N(6)-dimethyladenosine(1518)/N(6)-dimethyladenosine(1519) in 16S rRNA + 4 S-adenosyl-L-homocysteine + 4 H(+). In terms of biological role, specifically dimethylates two adjacent adenosines (A1518 and A1519) in the loop of a conserved hairpin near the 3'-end of 16S rRNA in the 30S particle. May play a critical role in biogenesis of 30S subunits. This is Ribosomal RNA small subunit methyltransferase A from Baumannia cicadellinicola subsp. Homalodisca coagulata.